A 141-amino-acid chain; its full sequence is Large-conductance mechanosensitive channel (141 aa).

3 consecutive transmembrane segments (helical) span residues 8–28 (FALK…AAFG), 38–58 (IIMP…FFPL), and 80–100 (GNFL…FLIV).

The protein belongs to the MscL family. As to quaternary structure, homopentamer.

It localises to the cell inner membrane. Functionally, channel that opens in response to stretch forces in the membrane lipid bilayer. May participate in the regulation of osmotic pressure changes within the cell. The protein is Large-conductance mechanosensitive channel of Beijerinckia indica subsp. indica (strain ATCC 9039 / DSM 1715 / NCIMB 8712).